The following is a 144-amino-acid chain: MRALIQRVLEAKVEVDGQTTGEIKKGLLVFLGLGKEDTLEKGQKLIDKILKYRIFDDEQGKMGWNVSQANGGVLLVSQFTLMAQTQKGLRPDFGPAMPPSDAKALYEQLVEYTRSQFENVQTGIFAADMKVHLINDGPVTFNLT.

Positions 137–138 (GP) match the Gly-cisPro motif, important for rejection of L-amino acids motif.

Belongs to the DTD family. In terms of assembly, homodimer.

Its subcellular location is the cytoplasm. It carries out the reaction glycyl-tRNA(Ala) + H2O = tRNA(Ala) + glycine + H(+). The catalysed reaction is a D-aminoacyl-tRNA + H2O = a tRNA + a D-alpha-amino acid + H(+). In terms of biological role, an aminoacyl-tRNA editing enzyme that deacylates mischarged D-aminoacyl-tRNAs. Also deacylates mischarged glycyl-tRNA(Ala), protecting cells against glycine mischarging by AlaRS. Acts via tRNA-based rather than protein-based catalysis; rejects L-amino acids rather than detecting D-amino acids in the active site. By recycling D-aminoacyl-tRNA to D-amino acids and free tRNA molecules, this enzyme counteracts the toxicity associated with the formation of D-aminoacyl-tRNA entities in vivo and helps enforce protein L-homochirality. The sequence is that of D-aminoacyl-tRNA deacylase from Acinetobacter baumannii (strain SDF).